Reading from the N-terminus, the 336-residue chain is Potassium channel subfamily K member 1 (336 aa).

The Cytoplasmic segment spans residues 1-20; sequence MLQSLAGSSCVRLVERHRSA. A helical membrane pass occupies residues 21-41; the sequence is WCFGLLVLGYLLYLVFGAVVF. Residues 42–103 are Extracellular-facing; the sequence is SSVELPYEDL…SNASGNWNWD (62 aa). Asparagine 95 carries N-linked (GlcNAc...) asparagine glycosylation. Positions 104 to 116 form an intramembrane region, helical; that stretch reads FTSALFFASTVLS. The stretch at 117–122 is an intramembrane region; it reads TTGYGH. The tract at residues 117–122 is selectivity filter 1; sequence TTGYGH. At 123-132 the chain is on the extracellular side; that stretch reads TVPLSDGGKA. The helical transmembrane segment at 133 to 156 threads the bilayer; it reads FCIIYSVIGIPFTLLFLTAVVQRI. Topologically, residues 157–181 are cytoplasmic; that stretch reads TVHVTRRPVLYFHIRWGFSKQMVGI. A helical transmembrane segment spans residues 182–202; it reads VHAVVLGFVTVSCFFFIPAAV. At 203-211 the chain is on the extracellular side; it reads FSVLEDDWN. The segment at residues 212-224 is an intramembrane region (helical); it reads FLESFYFCFISLS. The tract at residues 225 to 230 is selectivity filter 2; it reads TIGLGD. The stretch at 225–231 is an intramembrane region; that stretch reads TIGLGDY. The Extracellular portion of the chain corresponds to 232–243; the sequence is VPGEGYNQKFRE. The chain crosses the membrane as a helical span at residues 244 to 267; the sequence is LYKIGITCYLLLGLIAMLVVLETF. The Cytoplasmic portion of the chain corresponds to 268–336; it reads CELHELKKFR…SAYAEDSASH (69 aa). Lysine 274 is covalently cross-linked (Glycyl lysine isopeptide (Lys-Gly) (interchain with G-Cter in SUMO)). Residues 293–299 form an important for intracellular retention in recycling endosomes region; the sequence is IVEHDQL.

It belongs to the two pore domain potassium channel (TC 1.A.1.8) family. In terms of assembly, homodimer; disulfide-linked. Heterodimer with KCNK2; disulfide-linked. In astrocytes, forms mostly heterodimeric potassium channels with KCNK2, with only a minor proportion of functional channels containing homodimeric KCNK1. Interacts with KCNK3 and KCNK9, forming functional heterodimeric channels. Interacts with GNG4. Identified in a complex with PSD and ARF6; interacts only with PSD that is bound to ARF6. Interacts with UBE2I. Post-translationally, sumoylation is controversial. Sumoylated by UBE2I. Not sumoylated when expressed in xenopus oocytes or mammalian cells. Sumoylation inactivates the channel, but does not interfere with expression at the cell membrane. Sumoylation of a single subunit is sufficient to silence the dimeric channel. Sumoylation of KCNK1 is sufficient to silence heterodimeric channels formed by KCNK1 and KCNK3 or KCNK9. Desumoylated by SENP1; this activates the channel. Desumoylated by SENP1; this strongly increases halothane-mediated activation of heterodimeric channels formed with KCNK9. SENP1 treatment has no effect.

It is found in the cell membrane. Its subcellular location is the recycling endosome. The protein localises to the synaptic cell membrane. The protein resides in the cytoplasmic vesicle. It localises to the perikaryon. It is found in the cell projection. Its subcellular location is the dendrite. The protein localises to the apical cell membrane. It catalyses the reaction K(+)(in) = K(+)(out). The catalysed reaction is NH4(+)(in) = NH4(+)(out). The enzyme catalyses Na(+)(in) = Na(+)(out). It carries out the reaction Rb(+)(in) = Rb(+)(out). It catalyses the reaction Cs(+)(in) = Cs(+)(out). The catalysed reaction is Li(+)(in) = Li(+)(out). The enzyme catalyses L-glutamate(out) = L-glutamate(in). It carries out the reaction chloride(in) = chloride(out). In terms of biological role, ion channel that contributes to passive transmembrane potassium transport and to the regulation of the resting membrane potential in brain astrocytes, but also in kidney and in other tissues. Forms dimeric channels through which potassium ions pass in accordance with their electrochemical gradient. The channel is selective for K(+) ions at physiological potassium concentrations and at neutral pH, but becomes permeable to Na(+) at subphysiological K(+) levels and upon acidification of the extracellular medium. The homodimer has very low potassium channel activity, when expressed in heterologous systems, and can function as weakly inward rectifying potassium channel. Channel activity is modulated by activation of serotonin receptors. Heterodimeric channels containing KCNK1 and KCNK2 have much higher activity, and may represent the predominant form in astrocytes. Heterodimeric channels containing KCNK1 and KCNK3 or KCNK9 have much higher activity. Heterodimeric channels formed by KCNK1 and KCNK9 may contribute to halothane-sensitive currents. Mediates outward rectifying potassium currents in dentate gyrus granule cells and contributes to the regulation of their resting membrane potential. Contributes to the regulation of action potential firing in dentate gyrus granule cells and down-regulates their intrinsic excitability. In astrocytes, the heterodimer formed by KCNK1 and KCNK2 is required for rapid glutamate release in response to activation of G-protein coupled receptors, such as F2R and CNR1. Required for normal ion and water transport in the kidney. Contributes to the regulation of the resting membrane potential of pancreatic beta cells. The low channel activity of homodimeric KCNK1 may be due to sumoylation. The low channel activity may be due to rapid internalization from the cell membrane and retention in recycling endosomes. Permeable to monovalent cations with ion selectivity for K(+) &gt; Rb(+) &gt;&gt; NH4(+) &gt;&gt; Cs(+) = Na(+) = Li(+). The sequence is that of Potassium channel subfamily K member 1 from Cavia porcellus (Guinea pig).